The primary structure comprises 300 residues: Protein YIF1B-B (300 aa).

The tract at residues methionine 1–histidine 46 is disordered. At methionine 1–aspartate 142 the chain is on the cytoplasmic side. Residues leucine 143–threonine 163 traverse the membrane as a helical segment. Residues glutamine 164 to serine 178 are Extracellular-facing. A helical membrane pass occupies residues alanine 179–valine 199. Residues asparagine 200–threonine 205 lie on the Cytoplasmic side of the membrane. Residues valine 206–glycine 226 traverse the membrane as a helical segment. Leucine 227 is a topological domain (extracellular). The chain crosses the membrane as a helical span at residues leucine 228 to phenylalanine 248. Over methionine 249–tyrosine 278 the chain is Cytoplasmic. A helical transmembrane segment spans residues leucine 279 to valine 299. Residue arginine 300 is a topological domain, extracellular.

It belongs to the YIF1 family.

Its subcellular location is the endoplasmic reticulum membrane. It is found in the golgi apparatus membrane. The protein resides in the endoplasmic reticulum-Golgi intermediate compartment membrane. Its function is as follows. Functions in endoplasmic reticulum to Golgi vesicle-mediated transport and regulates the proper organization of the endoplasmic reticulum and the Golgi. Plays a key role in targeting to neuronal dendrites receptors such as HTR1A. Plays also a role in primary cilium and sperm flagellum assembly probably through protein transport to these compartments. This is Protein YIF1B-B (yif1b-b) from Xenopus laevis (African clawed frog).